The following is a 315-amino-acid chain: Glycine--tRNA ligase alpha subunit (315 aa).

Belongs to the class-II aminoacyl-tRNA synthetase family. Tetramer of two alpha and two beta subunits.

It is found in the cytoplasm. It carries out the reaction tRNA(Gly) + glycine + ATP = glycyl-tRNA(Gly) + AMP + diphosphate. The sequence is that of Glycine--tRNA ligase alpha subunit from Pseudomonas entomophila (strain L48).